A 223-amino-acid polypeptide reads, in one-letter code: MGLFGKTQEKPPKELVNEWSLKIRKEMRVVDRQIRDIQREEEKVKRSVKDAAKKGQKEVCVVLAKEMIRSRKAVSKLYASKAHMNSVLMGMKNQLAVLRVAGSLQKSTEVMKAMQSLVKIPEIQATMRELSKEMMKAGIIEEMLEDTFESMDDQEEMEEAAEMEIDRILFEITAGALGKAPSKVTDALPEPEPAGAMAASEGDEEDDEEDLEAMQSRLATLRS.

A lipid anchor (N-myristoyl glycine) is attached at Gly2. Positions 2–113 (GLFGKTQEKP…LQKSTEVMKA (112 aa)) are intramolecular interaction with C-terminus. Positions 22–54 (KIRKEMRVVDRQIRDIQREEEKVKRSVKDAAKK) form a coiled coil. Important for autoinhibitory function regions lie at residues 59-64 (VCVVLA) and 168-169 (IL). Positions 149 to 223 (ESMDDQEEME…MQSRLATLRS (75 aa)) form a coiled coil. The tract at residues 151 to 221 (MDDQEEMEEA…EAMQSRLATL (71 aa)) is intramolecular interaction with N-terminus. The segment at 151 to 223 (MDDQEEMEEA…MQSRLATLRS (73 aa)) is interaction with VPS4A. Residue Lys179 forms a Glycyl lysine isopeptide (Lys-Gly) (interchain with G-Cter in ubiquitin) linkage. The interval 180-223 (APSKVTDALPEPEPAGAMAASEGDEEDDEEDLEAMQSRLATLRS) is disordered. 3 interaction with STAMBP regions span residues 196-223 (AMAA…TLRS), 204-208 (EEDDE), and 222-223 (RS). A Phosphoserine modification is found at Ser200. Residues 201-212 (EGDEEDDEEDLE) carry the MIT-interacting motif motif. Over residues 201-212 (EGDEEDDEEDLE) the composition is skewed to acidic residues.

The protein belongs to the SNF7 family. In terms of assembly, probable core component of the endosomal sorting required for transport complex III (ESCRT-III). ESCRT-III components are thought to multimerize to form a flat lattice on the perimeter membrane of the endosome. Several assembly forms of ESCRT-III may exist that interact and act sequentially. Forms a metastable monomer in solution; its core structure (without part of the putative autoinhibitory C-terminal acidic region) oligomerizes into a flat lattice via two different dimerization interfaces. In vitro, heteromerizes with CHMP2A (but not CHMP4) to form helical tubular structures that expose membrane-interacting sites on the outside whereas VPS4B can associate on the inside of the tubule. May interact with IGFBP7; the relevance of such interaction however remains unclear. Interacts with CHMP2A. Interacts with CHMP4A; the interaction requires the release of CHMP4A autoinhibition. Interacts with VPS4A. Interacts with STAMBP; the interaction appears to relieve the autoinhibition of CHMP3. Interacts with VTA1.

It localises to the cytoplasm. The protein resides in the cytosol. Its subcellular location is the membrane. The protein localises to the endosome. It is found in the late endosome membrane. Probable core component of the endosomal sorting required for transport complex III (ESCRT-III) which is involved in multivesicular bodies (MVBs) formation and sorting of endosomal cargo proteins into MVBs. MVBs contain intraluminal vesicles (ILVs) that are generated by invagination and scission from the limiting membrane of the endosome and mostly are delivered to lysosomes enabling degradation of membrane proteins, such as stimulated growth factor receptors, lysosomal enzymes and lipids. The MVB pathway appears to require the sequential function of ESCRT-O, -I,-II and -III complexes. ESCRT-III proteins mostly dissociate from the invaginating membrane before the ILV is released. The ESCRT machinery also functions in topologically equivalent membrane fission events, such as the terminal stages of cytokinesis. ESCRT-III proteins are believed to mediate the necessary vesicle extrusion and/or membrane fission activities, possibly in conjunction with the AAA ATPase VPS4. Selectively binds to phosphatidylinositol 3,5-bisphosphate PtdIns(3,5)P2 and PtdIns(3,4)P2 in preference to other phosphoinositides tested. Involved in late stages of cytokinesis. Plays a role in endosomal sorting/trafficking of EGF receptor. In Rattus norvegicus (Rat), this protein is Charged multivesicular body protein 3 (Chmp3).